The primary structure comprises 605 residues: Kelch-like protein 26 (605 aa).

The BTB domain maps to 53-120 (LDVVLAIDNE…AYSSEVTLDL (68 aa)). Residues 155–256 (CLNIGQMATT…RSSELVDSVQ (102 aa)) form the BACK domain. Kelch repeat units lie at residues 300-351 (SLIT…VLDN), 352-403 (FVYV…VLDG), 404-450 (QLYA…TCGD), 452-498 (LYIS…SANN), 499-549 (RIYA…LLDK), and 551-598 (IYIV…PIIL).

Its function is as follows. May play a role in endo(sarco)plasmic reticulum (ER/SR) mitochondrial signaling. May be part of the ubiquitin-proteasome system (UPS) and affect ubiquitination and degradation of target substrates. The polypeptide is Kelch-like protein 26 (klhl26) (Danio rerio (Zebrafish)).